The following is a 187-amino-acid chain: Sodium/potassium ATPase inhibitor SPAI-2 (187 aa).

Positions 1-21 (MRSRSFLVLVAVFLICETLVA) are cleaved as a signal peptide. Gln22 is subject to Pyrrolidone carboxylic acid. The propeptide occupies 22 to 126 (QRLDRIRGPK…NAQLPDKVQD (105 aa)). The tract at residues 28 to 98 (RGPKGQGQDP…QDPVKAELPD (71 aa)) is disordered. A run of 14 repeats spans residues 34-39 (GQDPVE), 40-45 (GQDQDE), 46-51 (GPGPVK), 58-63 (GQDPVK), 64-69 (GQDPVK), 70-75 (GQDPVK), 76-81 (GQDPVK), 82-87 (GQDLVK), 88-93 (SQDPVK), 100-105 (GQDVVK), 106-111 (GHEPVE), 112-117 (GQDPVN), 118-123 (AQLPDK), and 124-129 (VQDPVK). The interval 34–129 (GQDPVEGQDQ…LPDKVQDPVK (96 aa)) is 14 X 6 AA approximate tandem repeats. One copy of the SVP-1 clotting 1 repeat lies at 64 to 85 (GQDPVKGQDPVKGQDPVKGQDL). Residues 139-187 (LLSKRGHCPRILFRCPLSNPSNKCWRDYDCPGVKKCCEGFCGKDCLYPK) enclose the WAP domain. 4 disulfide bridges follow: Cys146-Cys175, Cys153-Cys179, Cys162-Cys174, and Cys168-Cys183.

Post-translationally, the short form (AA 127-187) may be an artifact due to the strongly acidic conditions of the duodenum. The pro-SPAI form may be the native form. As to expression, small intestine &gt; large intestine. The plasma contains the pro-SPAI form circulating.

Functionally, inhibits Na(+),K(+) ATPase by the competitive mode against Na(+). The sequence is that of Sodium/potassium ATPase inhibitor SPAI-2 from Sus scrofa (Pig).